A 401-amino-acid polypeptide reads, in one-letter code: Argininosuccinate synthase (401 aa).

Residues 10–18 (AYSGGVDTS) and alanine 38 each bind ATP. Tyrosine 89 lines the L-citrulline pocket. Glycine 119 serves as a coordination point for ATP. Positions 121, 125, and 126 each coordinate L-aspartate. Asparagine 125 is an L-citrulline binding site. L-citrulline is bound by residues arginine 129, serine 177, serine 186, glutamate 262, and tyrosine 274.

Belongs to the argininosuccinate synthase family. Type 1 subfamily. In terms of assembly, homotetramer.

The protein resides in the cytoplasm. The enzyme catalyses L-citrulline + L-aspartate + ATP = 2-(N(omega)-L-arginino)succinate + AMP + diphosphate + H(+). It functions in the pathway amino-acid biosynthesis; L-arginine biosynthesis; L-arginine from L-ornithine and carbamoyl phosphate: step 2/3. The chain is Argininosuccinate synthase from Microcystis aeruginosa (strain NIES-843 / IAM M-2473).